Consider the following 95-residue polypeptide: Small ribosomal subunit protein bS6 (95 aa).

It belongs to the bacterial ribosomal protein bS6 family.

In terms of biological role, binds together with bS18 to 16S ribosomal RNA. In Corynebacterium urealyticum (strain ATCC 43042 / DSM 7109), this protein is Small ribosomal subunit protein bS6.